Here is a 112-residue protein sequence, read N- to C-terminus: Small ribosomal subunit protein bS6 (112 aa).

It belongs to the bacterial ribosomal protein bS6 family.

In terms of biological role, binds together with bS18 to 16S ribosomal RNA. This is Small ribosomal subunit protein bS6 from Hyphomonas neptunium (strain ATCC 15444).